The primary structure comprises 400 residues: Subtilisin-like protease CPC735_047380 (400 aa).

A signal peptide spans 1 to 19 (MARINVVVSFLAALAVVQA). Residues 20–118 (AQLLNLDGQK…IEPQRTFRAF (99 aa)) constitute a propeptide that is removed on maturation. An Inhibitor I9 domain is found at 35-116 (SYVVVMNDGL…NYIEPQRTFR (82 aa)). Positions 128–400 (SWGLGRISHT…DKLLYNGSGQ (273 aa)) constitute a Peptidase S8 domain. The N-linked (GlcNAc...) asparagine glycan is linked to N153. Active-site charge relay system residues include D160 and H191. N-linked (GlcNAc...) asparagine glycosylation is found at N244 and N252. The active-site Charge relay system is S346. N396 carries N-linked (GlcNAc...) asparagine glycosylation.

This sequence belongs to the peptidase S8 family.

It localises to the secreted. In terms of biological role, secreted subtilisin-like serine protease with keratinolytic activity that contributes to pathogenicity. The chain is Subtilisin-like protease CPC735_047380 from Coccidioides posadasii (strain C735) (Valley fever fungus).